Here is a 303-residue protein sequence, read N- to C-terminus: Probable 5-dehydro-4-deoxyglucarate dehydratase (303 aa).

Belongs to the DapA family.

It carries out the reaction 5-dehydro-4-deoxy-D-glucarate + H(+) = 2,5-dioxopentanoate + CO2 + H2O. It functions in the pathway carbohydrate acid metabolism; D-glucarate degradation; 2,5-dioxopentanoate from D-glucarate: step 2/2. This is Probable 5-dehydro-4-deoxyglucarate dehydratase from Leptothrix cholodnii (strain ATCC 51168 / LMG 8142 / SP-6) (Leptothrix discophora (strain SP-6)).